We begin with the raw amino-acid sequence, 556 residues long: Arginine--tRNA ligase (556 aa).

Positions 133-143 (ANPTGPIHIGH) match the 'HIGH' region motif.

It belongs to the class-I aminoacyl-tRNA synthetase family. In terms of assembly, monomer.

The protein localises to the cytoplasm. The enzyme catalyses tRNA(Arg) + L-arginine + ATP = L-arginyl-tRNA(Arg) + AMP + diphosphate. In Dehalococcoides mccartyi (strain CBDB1), this protein is Arginine--tRNA ligase.